The primary structure comprises 195 residues: MYLEQVKTELFEAQDVLNKFISNEQNIKLIQQAALLISDSFKQHGKVLSCGNGGSHCDAMHFAEELTGRYRENRPGYPAIAISDVSHLSCVSNDFGYEHVFSRYVEAVGQKGDVLLGISTSGNSKNVLNAIEAAKAKGMKVIALTGKDGGKMAGLADVEIRVPHFRFADRIQEIHIKVIHILIMLIEFEMAKIRQ.

The SIS domain maps to 37 to 195 (ISDSFKQHGK…IEFEMAKIRQ (159 aa)). 52–54 (NGG) provides a ligand contact to substrate. Zn(2+)-binding residues include H61 and E65. Substrate-binding positions include E65, 93–94 (ND), 119–121 (STS), S124, and Q172. Zn(2+) contacts are provided by Q172 and H180.

It belongs to the SIS family. GmhA subfamily. In terms of assembly, homotetramer. Zn(2+) is required as a cofactor.

The protein resides in the cytoplasm. It catalyses the reaction 2 D-sedoheptulose 7-phosphate = D-glycero-alpha-D-manno-heptose 7-phosphate + D-glycero-beta-D-manno-heptose 7-phosphate. It functions in the pathway carbohydrate biosynthesis; D-glycero-D-manno-heptose 7-phosphate biosynthesis; D-glycero-alpha-D-manno-heptose 7-phosphate and D-glycero-beta-D-manno-heptose 7-phosphate from sedoheptulose 7-phosphate: step 1/1. In terms of biological role, catalyzes the isomerization of sedoheptulose 7-phosphate in D-glycero-D-manno-heptose 7-phosphate. The sequence is that of Phosphoheptose isomerase from Histophilus somni (strain 2336) (Haemophilus somnus).